Consider the following 628-residue polypeptide: EIN3-binding F-box protein 1 (628 aa).

Positions 61-109 (PVSIDVLPDECLFEIFRRLSGPQERSACAFVSKQWLTLVSSIRQKEIDV) constitute an F-box domain.

Part of a SCF (SKP1-cullin-F-box) protein ligase complex. Interacts with CUL1, SKP1A/ASK1, SKP1B/ASK2, ASK11, ASK12, ASK13, ASK18, EIN3, and EIL1. Ubiquitous.

Its subcellular location is the nucleus. It functions in the pathway protein modification; protein ubiquitination. Component of SCF(EBF1) E3 ubiquitin ligase complexes, which may mediate the ubiquitination and subsequent proteasomal degradation of target proteins (probably including EIN3 and EIL1). Regulator of the ethylene signaling cascade by modulating the stability of EIN3 and EIL1 proteins. Confers insensitivity to ethylene. The chain is EIN3-binding F-box protein 1 (EBF1) from Arabidopsis thaliana (Mouse-ear cress).